The following is a 776-amino-acid chain: General transcription and DNA repair factor IIH helicase subunit XPD (776 aa).

A Helicase ATP-binding domain is found at Asp-7–Asp-277. Met-42–Thr-49 is an ATP binding site. Cys-115, Cys-133, Cys-150, and Cys-184 together coordinate [4Fe-4S] cluster. The short motif at Asp-228 to His-231 is the DEAH box element. The disordered stretch occupies residues His-736 to Thr-776. Positions Thr-742–Asn-754 are enriched in polar residues. Residues Ser-755–Thr-776 show a composition bias toward low complexity.

It belongs to the helicase family. RAD3/XPD subfamily. In terms of assembly, component of the 7-subunit TFIIH core complex composed of XPB/repB, XPD/repD, gtf2h1, gtf2h2, gtf2h3, gtf2h4 and gtf2h5, which is active in NER. The core complex associates with the 3-subunit CDK-activating kinase (CAK) module composed of cycH/cyclin H, cdk7 and mnat1 to form the 10-subunit holoenzyme (holo-TFIIH) active in transcription. Mg(2+) is required as a cofactor. [4Fe-4S] cluster serves as cofactor.

The protein resides in the nucleus. It catalyses the reaction Couples ATP hydrolysis with the unwinding of duplex DNA at the replication fork by translocating in the 5'-3' direction. This creates two antiparallel DNA single strands (ssDNA). The leading ssDNA polymer is the template for DNA polymerase III holoenzyme which synthesizes a continuous strand.. It carries out the reaction ATP + H2O = ADP + phosphate + H(+). In terms of biological role, ATP-dependent 5'-3' DNA helicase, component of the general transcription and DNA repair factor IIH (TFIIH) core complex, which is involved in general and transcription-coupled nucleotide excision repair (NER) of damaged DNA and, when complexed to CDK-activating kinase (CAK), in transcription by RNA polymerase II. In NER, TFIIH acts by opening DNA around the lesion to allow the excision of the damaged oligonucleotide and its replacement by a new DNA fragment. The ATP-dependent helicase activity of XPD/repD is required for DNA opening. In transcription, TFIIH has an essential role in transcription initiation. When the pre-initiation complex (PIC) has been established, TFIIH is required for promoter opening and promoter escape. Phosphorylation of the C-terminal tail (CTD) of the largest subunit of RNA polymerase II by the kinase module CAK controls the initiation of transcription. XPD/repD acts by forming a bridge between CAK and the core-TFIIH complex. The sequence is that of General transcription and DNA repair factor IIH helicase subunit XPD from Dictyostelium discoideum (Social amoeba).